The chain runs to 159 residues: 2-C-methyl-D-erythritol 2,4-cyclodiphosphate synthase (159 aa).

A divalent metal cation contacts are provided by Asp10 and His12. Residues 10–12 (DVH) and 37–38 (HS) contribute to the 4-CDP-2-C-methyl-D-erythritol 2-phosphate site. His45 lines the a divalent metal cation pocket. 4-CDP-2-C-methyl-D-erythritol 2-phosphate contacts are provided by residues 59–61 (DIG), 64–68 (FLDTD), 103–109 (AQAPKML), 135–138 (TTTE), Phe142, and Arg145.

It belongs to the IspF family. In terms of assembly, homotrimer. Requires a divalent metal cation as cofactor.

It catalyses the reaction 4-CDP-2-C-methyl-D-erythritol 2-phosphate = 2-C-methyl-D-erythritol 2,4-cyclic diphosphate + CMP. It functions in the pathway isoprenoid biosynthesis; isopentenyl diphosphate biosynthesis via DXP pathway; isopentenyl diphosphate from 1-deoxy-D-xylulose 5-phosphate: step 4/6. Functionally, involved in the biosynthesis of isopentenyl diphosphate (IPP) and dimethylallyl diphosphate (DMAPP), two major building blocks of isoprenoid compounds. Catalyzes the conversion of 4-diphosphocytidyl-2-C-methyl-D-erythritol 2-phosphate (CDP-ME2P) to 2-C-methyl-D-erythritol 2,4-cyclodiphosphate (ME-CPP) with a corresponding release of cytidine 5-monophosphate (CMP). In Francisella tularensis subsp. holarctica (strain FTNF002-00 / FTA), this protein is 2-C-methyl-D-erythritol 2,4-cyclodiphosphate synthase.